The chain runs to 380 residues: Transaldolase (380 aa).

The Schiff-base intermediate with substrate role is filled by Lys-141.

This sequence belongs to the transaldolase family. Type 2 subfamily.

It is found in the cytoplasm. It carries out the reaction D-sedoheptulose 7-phosphate + D-glyceraldehyde 3-phosphate = D-erythrose 4-phosphate + beta-D-fructose 6-phosphate. Its pathway is carbohydrate degradation; pentose phosphate pathway; D-glyceraldehyde 3-phosphate and beta-D-fructose 6-phosphate from D-ribose 5-phosphate and D-xylulose 5-phosphate (non-oxidative stage): step 2/3. In terms of biological role, transaldolase is important for the balance of metabolites in the pentose-phosphate pathway. This is Transaldolase from Trichodesmium erythraeum (strain IMS101).